The primary structure comprises 460 residues: V-type ATP synthase beta chain (460 aa).

The protein belongs to the ATPase alpha/beta chains family.

In terms of biological role, produces ATP from ADP in the presence of a proton gradient across the membrane. The V-type beta chain is a regulatory subunit. This chain is V-type ATP synthase beta chain, found in Thermotoga neapolitana (strain ATCC 49049 / DSM 4359 / NBRC 107923 / NS-E).